A 147-amino-acid chain; its full sequence is Cyanate hydratase (147 aa).

Residues Arg-88, Glu-91, and Ser-114 contribute to the active site.

It belongs to the cyanase family.

The enzyme catalyses cyanate + hydrogencarbonate + 3 H(+) = NH4(+) + 2 CO2. Functionally, catalyzes the reaction of cyanate with bicarbonate to produce ammonia and carbon dioxide. This Polaromonas sp. (strain JS666 / ATCC BAA-500) protein is Cyanate hydratase.